The primary structure comprises 282 residues: MKPKVQNLIFDLDGTLLSWGHEPLPQTVTFLKELQKQGFKITFATGRSHILIRNTTQFIQPDLPVISSNGALIYDFAREKALHMTQLAPQSVVPIMRLLLQLEESFCIYTDKKVFGFEKPGIPCKRLRTTQSKIVEPDITQNNFTINPLTDASKFDFATQNITKILLITEDRGRISKITKHLDAIENISYVSSMTFALDIMHKDVNKAYGLKALEQQTGLDPQMTMVFGDGDNDVEIFNAVKYSVAMANGSDLAKQNATFISEFDNDHDGIYHFLQCFLKIE.

Asp-11 acts as the Nucleophile in catalysis. Residue Asp-11 participates in Mg(2+) binding. Phosphate is bound at residue Leu-12. Position 13 (Asp-13) interacts with Mg(2+). Phosphate contacts are provided by residues 45 to 46 and Lys-207; that span reads TG. Asp-230 serves as a coordination point for Mg(2+). Asn-233 is a binding site for phosphate.

The protein belongs to the HAD-like hydrolase superfamily. Cof family. Mg(2+) is required as a cofactor.

The chain is Putative phosphatase MPN_383 from Mycoplasma pneumoniae (strain ATCC 29342 / M129 / Subtype 1) (Mycoplasmoides pneumoniae).